Here is a 311-residue protein sequence, read N- to C-terminus: Aspartate carbamoyltransferase catalytic subunit (311 aa).

Arg-55 and Thr-56 together coordinate carbamoyl phosphate. Lys-85 is an L-aspartate binding site. Residues Arg-106, His-135, and Gln-138 each coordinate carbamoyl phosphate. Positions 168 and 230 each coordinate L-aspartate. Carbamoyl phosphate contacts are provided by Leu-268 and Pro-269.

This sequence belongs to the aspartate/ornithine carbamoyltransferase superfamily. ATCase family. As to quaternary structure, heterododecamer (2C3:3R2) of six catalytic PyrB chains organized as two trimers (C3), and six regulatory PyrI chains organized as three dimers (R2).

The catalysed reaction is carbamoyl phosphate + L-aspartate = N-carbamoyl-L-aspartate + phosphate + H(+). It participates in pyrimidine metabolism; UMP biosynthesis via de novo pathway; (S)-dihydroorotate from bicarbonate: step 2/3. Its function is as follows. Catalyzes the condensation of carbamoyl phosphate and aspartate to form carbamoyl aspartate and inorganic phosphate, the committed step in the de novo pyrimidine nucleotide biosynthesis pathway. The chain is Aspartate carbamoyltransferase catalytic subunit from Salmonella paratyphi A (strain AKU_12601).